Consider the following 482-residue polypeptide: Coagulation factor X (482 aa).

The N-terminal stretch at 1 to 20 (MESPVRLSLLYVVLASLLLP) is a signal peptide. A propeptide spanning residues 21 to 40 (GRSVFINRERANNVLQRIRR) is cleaved from the precursor. The Gla domain maps to 41 to 85 (ANSFFEEIKKGNLERECVEEICSFEEAREVFEDNEKTTEFWNKYE). Residues Glu-46, Glu-47, Glu-54, Glu-56, Glu-59, Glu-60, Glu-65, Glu-66, Glu-69, Glu-72, Glu-75, and Glu-79 each carry the 4-carboxyglutamate modification. A disulfide bridge links Cys-57 with Cys-62. The EGF-like 1; calcium-binding domain maps to 86–122 (DGDQCESSPCQNQGECRDGLGSYTCTCTEGFEGKNCE). Cystine bridges form between Cys-90–Cys-101, Cys-95–Cys-110, Cys-112–Cys-121, Cys-129–Cys-140, Cys-136–Cys-149, Cys-151–Cys-164, Cys-172–Cys-340, Cys-238–Cys-243, Cys-259–Cys-275, Cys-388–Cys-402, and Cys-413–Cys-441. The residue at position 103 (Asp-103) is a (3R)-3-hydroxyaspartate. The EGF-like 2 domain occupies 125-165 (VRKLCSLDNGDCDQFCREEQNSVVCSCAKGYFLGNDGKSCL). The propeptide at 184–231 (VALNTSNSEPDPEDLMPDADILYPTESPSELLNLNKTEPEANSDDVIR) is activation peptide. Asn-187 and Asn-218 each carry an N-linked (GlcNAc...) asparagine glycan. The Peptidase S1 domain occupies 232–465 (IVGGQECKRG…FLKWIDRSMK (234 aa)). Residues His-274 and Asp-320 each act as charge relay system in the active site. The active-site Charge relay system is Ser-417.

This sequence belongs to the peptidase S1 family. In terms of assembly, the two chains are formed from a single-chain precursor by the excision of two Arg residues and are held together by 1 or more disulfide bonds. Forms a heterodimer with SERPINA5. Interacts with ixolaris, an anticoagulant protein from Ixodes scapularis saliva. The vitamin K-dependent, enzymatic carboxylation of some glutamate residues allows the modified protein to bind calcium. Post-translationally, N- and O-glycosylated. In terms of processing, proteolytically cleaved and activated by cathepsin CTSG. The activation peptide is cleaved by factor IXa (in the intrinsic pathway), or by factor VIIa (in the extrinsic pathway). The iron and 2-oxoglutarate dependent 3-hydroxylation of aspartate and asparagine is (R) stereospecific within EGF domains. Plasma; synthesized in the liver.

The protein resides in the secreted. It carries out the reaction Selective cleavage of Arg-|-Thr and then Arg-|-Ile bonds in prothrombin to form thrombin.. Inhibited by SERPINA5. Functionally, factor Xa is a vitamin K-dependent glycoprotein that converts prothrombin to thrombin in the presence of factor Va, calcium and phospholipid during blood clotting. Factor Xa activates pro-inflammatory signaling pathways in a protease-activated receptor (PAR)-dependent manner. The chain is Coagulation factor X (F10) from Rattus norvegicus (Rat).